Reading from the N-terminus, the 302-residue chain is Glycine--tRNA ligase alpha subunit (302 aa).

It belongs to the class-II aminoacyl-tRNA synthetase family. Tetramer of two alpha and two beta subunits.

The protein localises to the cytoplasm. It catalyses the reaction tRNA(Gly) + glycine + ATP = glycyl-tRNA(Gly) + AMP + diphosphate. The sequence is that of Glycine--tRNA ligase alpha subunit from Xanthomonas euvesicatoria pv. vesicatoria (strain 85-10) (Xanthomonas campestris pv. vesicatoria).